The following is a 56-amino-acid chain: Large ribosomal subunit protein uL30 (56 aa).

Belongs to the universal ribosomal protein uL30 family. As to quaternary structure, part of the 50S ribosomal subunit.

This chain is Large ribosomal subunit protein uL30, found in Oleidesulfovibrio alaskensis (strain ATCC BAA-1058 / DSM 17464 / G20) (Desulfovibrio alaskensis).